Consider the following 1043-residue polypeptide: Unconventional myosin-Ia (1043 aa).

In terms of domain architecture, Myosin motor spans 8–694; it reads VGVEDLVLLE…TLFYLEEQRR (687 aa). 101–108 lines the ATP pocket; the sequence is GESGAGKT. The interval 571–593 is actin-binding; that stretch reads VTTLMKNLYSKNPNYIRCIKPNE. IQ domains lie at 697-719, 720-742, and 743-772; these read LQQLATLIQKTYRGWRCRTHYQL, MRKSQIVISSWFRGNMQKKHYRK, and MKASALLIQAFVRGWKARKNYRKYFRSGAA. The TH1 domain maps to 858-1042; that stretch reads KASYPQSVPI…KGSRCLEVTV (185 aa).

It belongs to the TRAFAC class myosin-kinesin ATPase superfamily. Myosin family. In terms of processing, phosphorylated by ALPK1.

Its function is as follows. Involved in directing the movement of organelles along actin filaments. The sequence is that of Unconventional myosin-Ia (MYO1A) from Bos taurus (Bovine).